A 541-amino-acid polypeptide reads, in one-letter code: Pseudokinase FAM20A (541 aa).

The signal sequence occupies residues 1 to 33 (MPGLRRDRLLTLLLLGALLSADLYFHLWPQVQR). Residues 38–90 (RERPRGCPCTGRASSLARDSAAAASDPGTIVHNFSRTEPRTEPAGGSHSGSSS) form a disordered region. Residues 49–63 (RASSLARDSAAAASD) show a composition bias toward low complexity. Asn70, Asn145, and Asn287 each carry an N-linked (GlcNAc...) asparagine glycan. 4 cysteine pairs are disulfide-bonded: Cys314–Cys330, Cys319–Cys323, Cys378–Cys452, and Cys453–Cys512. Asn388 carries N-linked (GlcNAc...) asparagine glycosylation. Asn538 is a glycosylation site (N-linked (GlcNAc...) asparagine).

This sequence belongs to the FAM20 family. In terms of assembly, interacts with FAM20C; probably forming a heterotetramer of 2 subunits of FAM20A and 2 subunits of FAM20C. In terms of processing, N-glycosylated. Highly expressed in lung and liver. Intermediate levels in thymus and ovary.

It is found in the secreted. It localises to the golgi apparatus. The protein resides in the endoplasmic reticulum. Its function is as follows. Pseudokinase that acts as an allosteric activator of the Golgi serine/threonine protein kinase FAM20C and is involved in biomineralization of teeth. Forms a complex with FAM20C and increases the ability of FAM20C to phosphorylate the proteins that form the 'matrix' that guides the deposition of the enamel minerals. The sequence is that of Pseudokinase FAM20A from Homo sapiens (Human).